The chain runs to 237 residues: Survival of motor neuron-related-splicing factor 30 (237 aa).

Polar residues predominate over residues 52 to 69 (SQPAEGTTSTKSSETVAP). 2 disordered regions span residues 52–73 (SQPA…SHSW) and 149–198 (REYK…RSIF). In terms of domain architecture, Tudor spans 72–132 (SWRVGDHCMA…KKVEEGRIRD (61 aa)). The Nuclear localization signal motif lies at 142–160 (KELQAEQREYKKKKAQKKV). The span at 151–161 (YKKKKAQKKVQ) shows a compositional bias: basic residues. The span at 162 to 175 (RMKELEQEREDQKS) shows a compositional bias: basic and acidic residues. Positions 176–185 (KWQQFNNKAY) are enriched in polar residues.

The protein belongs to the SMN family. Associates with spliceosomes.

It is found in the nucleus speckle. The protein resides in the nucleus. The protein localises to the cajal body. Its function is as follows. Involved in spliceosome assembly. This is Survival of motor neuron-related-splicing factor 30 (smndc1) from Danio rerio (Zebrafish).